The primary structure comprises 452 residues: Pup--protein ligase (452 aa).

A Mg(2+)-binding site is contributed by glutamate 9. An ATP-binding site is contributed by arginine 53. Tyrosine 55 is a binding site for Mg(2+). The active-site Proton acceptor is aspartate 57. Position 63 (glutamate 63) interacts with Mg(2+). Residues threonine 66 and tryptophan 419 each contribute to the ATP site.

Belongs to the Pup ligase/Pup deamidase family. Pup-conjugating enzyme subfamily.

The enzyme catalyses ATP + [prokaryotic ubiquitin-like protein]-L-glutamate + [protein]-L-lysine = ADP + phosphate + N(6)-([prokaryotic ubiquitin-like protein]-gamma-L-glutamyl)-[protein]-L-lysine.. The protein operates within protein degradation; proteasomal Pup-dependent pathway. Its pathway is protein modification; protein pupylation. Functionally, catalyzes the covalent attachment of the prokaryotic ubiquitin-like protein modifier Pup to the proteasomal substrate proteins, thereby targeting them for proteasomal degradation. This tagging system is termed pupylation. The ligation reaction involves the side-chain carboxylate of the C-terminal glutamate of Pup and the side-chain amino group of a substrate lysine. The chain is Pup--protein ligase from Nakamurella multipartita (strain ATCC 700099 / DSM 44233 / CIP 104796 / JCM 9543 / NBRC 105858 / Y-104) (Microsphaera multipartita).